Consider the following 1065-residue polypeptide: Carbamoyl phosphate synthase large chain (1065 aa).

Residues 1 to 401 (MPKRRDIETI…SLLKAVRSLE (401 aa)) form a carboxyphosphate synthetic domain region. Arg-129, Arg-169, Gly-175, Gly-176, Arg-208, Ile-210, Glu-215, Gly-241, Ile-242, His-243, Gln-284, and Glu-298 together coordinate ATP. Residues 133-327 (RALMNELGEP…IAKLAAKIAV (195 aa)) form the ATP-grasp 1 domain. Residues Gln-284, Glu-298, and Asn-300 each contribute to the Mg(2+) site. 3 residues coordinate Mn(2+): Gln-284, Glu-298, and Asn-300. The tract at residues 402–546 (IGVHHLELNE…YSTYEEENES (145 aa)) is oligomerization domain. Positions 547–929 (IVTEKPSVIV…ALYKGLVASG (383 aa)) are carbamoyl phosphate synthetic domain. An ATP-grasp 2 domain is found at 671-861 (EQALSELGIP…MANLATKAIL (191 aa)). ATP is bound by residues Arg-707, Arg-746, Ile-748, Glu-752, Gly-777, Val-778, His-779, Ser-780, Gln-820, and Glu-832. Residues Gln-820, Glu-832, and Asn-834 each contribute to the Mg(2+) site. 3 residues coordinate Mn(2+): Gln-820, Glu-832, and Asn-834. The MGS-like domain maps to 930–1065 (IHIQPHGAVL…TAMTEGLVRS (136 aa)). The allosteric domain stretch occupies residues 930–1065 (IHIQPHGAVL…TAMTEGLVRS (136 aa)).

Belongs to the CarB family. In terms of assembly, composed of two chains; the small (or glutamine) chain promotes the hydrolysis of glutamine to ammonia, which is used by the large (or ammonia) chain to synthesize carbamoyl phosphate. Tetramer of heterodimers (alpha,beta)4. The cofactor is Mg(2+). Mn(2+) serves as cofactor.

The enzyme catalyses hydrogencarbonate + L-glutamine + 2 ATP + H2O = carbamoyl phosphate + L-glutamate + 2 ADP + phosphate + 2 H(+). It carries out the reaction hydrogencarbonate + NH4(+) + 2 ATP = carbamoyl phosphate + 2 ADP + phosphate + 2 H(+). It participates in amino-acid biosynthesis; L-arginine biosynthesis; carbamoyl phosphate from bicarbonate: step 1/1. It functions in the pathway pyrimidine metabolism; UMP biosynthesis via de novo pathway; (S)-dihydroorotate from bicarbonate: step 1/3. Large subunit of the glutamine-dependent carbamoyl phosphate synthetase (CPSase). CPSase catalyzes the formation of carbamoyl phosphate from the ammonia moiety of glutamine, carbonate, and phosphate donated by ATP, constituting the first step of 2 biosynthetic pathways, one leading to arginine and/or urea and the other to pyrimidine nucleotides. The large subunit (synthetase) binds the substrates ammonia (free or transferred from glutamine from the small subunit), hydrogencarbonate and ATP and carries out an ATP-coupled ligase reaction, activating hydrogencarbonate by forming carboxy phosphate which reacts with ammonia to form carbamoyl phosphate. The chain is Carbamoyl phosphate synthase large chain from Bacillus caldolyticus.